The following is a 211-amino-acid chain: Protein-methionine-sulfoxide reductase heme-binding subunit MsrQ (211 aa).

Helical transmembrane passes span 10–30, 54–74, 82–102, 116–136, 153–173, and 178–198; these read WLKV…VWAI, FLLA…PLLI, LWCF…ELGV, PYLT…FTST, FVYL…KIIS, and IYAG…LSLF.

Belongs to the MsrQ family. As to quaternary structure, heterodimer of a catalytic subunit (MsrP) and a heme-binding subunit (MsrQ). FMN is required as a cofactor. It depends on heme b as a cofactor.

The protein localises to the cell inner membrane. In terms of biological role, part of the MsrPQ system that repairs oxidized periplasmic proteins containing methionine sulfoxide residues (Met-O), using respiratory chain electrons. Thus protects these proteins from oxidative-stress damage caused by reactive species of oxygen and chlorine generated by the host defense mechanisms. MsrPQ is essential for the maintenance of envelope integrity under bleach stress, rescuing a wide series of structurally unrelated periplasmic proteins from methionine oxidation, including the primary periplasmic chaperone SurA and the lipoprotein Pal. MsrQ provides electrons for reduction to the reductase catalytic subunit MsrP, using the quinone pool of the respiratory chain. The sequence is that of Protein-methionine-sulfoxide reductase heme-binding subunit MsrQ from Escherichia coli O6:H1 (strain CFT073 / ATCC 700928 / UPEC).